The sequence spans 152 residues: Small ribosomal subunit protein uS13 (152 aa).

This sequence belongs to the universal ribosomal protein uS13 family. In terms of assembly, component of the small ribosomal subunit.

It is found in the cytoplasm. In terms of biological role, component of the small ribosomal subunit. The ribosome is a large ribonucleoprotein complex responsible for the synthesis of proteins in the cell. Plays an essential role in early embryonic development. The chain is Small ribosomal subunit protein uS13 (rps18) from Danio rerio (Zebrafish).